A 419-amino-acid chain; its full sequence is E3 ubiquitin-protein ligase pellino homolog 2 (419 aa).

The FHA; atypical domain occupies 15–202 (EPVKYRELVV…HPQGGFTEES (188 aa)).

Belongs to the pellino family. In terms of assembly, interacts with TRAF6, IRAK4 and MAP3K7. Interacts with IRAK1. Interacts with BCL10; this interaction is impaired by SOCS3. In terms of processing, phosphorylated by IRAK1 and IRAK4 enhancing its E3 ligase activity. As to expression, widely expressed both in embryos and adult. Weakly or not expressed in spleen and thymus.

The catalysed reaction is S-ubiquitinyl-[E2 ubiquitin-conjugating enzyme]-L-cysteine + [acceptor protein]-L-lysine = [E2 ubiquitin-conjugating enzyme]-L-cysteine + N(6)-ubiquitinyl-[acceptor protein]-L-lysine.. The protein operates within protein modification; protein ubiquitination. Functionally, E3 ubiquitin ligase catalyzing the covalent attachment of ubiquitin moieties onto substrate proteins. Involved in the TLR and IL-1 signaling pathways via interaction with the complex containing IRAK kinases and TRAF6. Mediates IL1B-induced IRAK1 'Lys-63'-linked polyubiquitination and possibly 'Lys-48'-linked ubiquitination. May be important for LPS- and IL1B-induced MAP3K7-dependent, but not MAP3K3-dependent, NF-kappa-B activation. Can activate the MAP (mitogen activated protein) kinase pathway leading to activation of ELK1. The polypeptide is E3 ubiquitin-protein ligase pellino homolog 2 (Peli2) (Mus musculus (Mouse)).